A 485-amino-acid polypeptide reads, in one-letter code: Two-component response regulator ORR31 (485 aa).

The 126-residue stretch at 13-138 (RVMPVDGDTK…TMAQLWRVVA (126 aa)) folds into the Response regulatory domain. Asp66 is subject to 4-aspartylphosphate. The segment covering 195–204 (LTINVDSGSS) has biased composition (polar residues). Residues 195–236 (LTINVDSGSSDGADANPRQKLEHKKDAKGPLGQHVASHLQPQ) form a disordered region. Positions 211–222 (PRQKLEHKKDAK) are enriched in basic and acidic residues.

The protein belongs to the ARR family. Type-B subfamily. In terms of processing, two-component system major event consists of a His-to-Asp phosphorelay between a sensor histidine kinase (HK) and a response regulator (RR). In plants, the His-to-Asp phosphorelay involves an additional intermediate named Histidine-containing phosphotransfer protein (HPt). This multistep phosphorelay consists of a His-Asp-His-Asp sequential transfer of a phosphate group between first a His and an Asp of the HK protein, followed by the transfer to a conserved His of the HPt protein and finally the transfer to an Asp in the receiver domain of the RR protein.

Functionally, functions as a response regulator involved in His-to-Asp phosphorelay signal transduction system. Phosphorylation of the Asp residue in the receiver domain activates the ability of the protein to promote the transcription of target genes. May directly activate some type-A response regulators in response to cytokinins. The sequence is that of Two-component response regulator ORR31 from Oryza sativa subsp. japonica (Rice).